The following is a 171-amino-acid chain: Methylated-DNA--protein-cysteine methyltransferase (171 aa).

Catalysis depends on cysteine 139, which acts as the Nucleophile; methyl group acceptor.

This sequence belongs to the MGMT family.

Its subcellular location is the cytoplasm. The catalysed reaction is a 6-O-methyl-2'-deoxyguanosine in DNA + L-cysteinyl-[protein] = S-methyl-L-cysteinyl-[protein] + a 2'-deoxyguanosine in DNA. The enzyme catalyses a 4-O-methyl-thymidine in DNA + L-cysteinyl-[protein] = a thymidine in DNA + S-methyl-L-cysteinyl-[protein]. In terms of biological role, involved in the cellular defense against the biological effects of O6-methylguanine (O6-MeG) and O4-methylthymine (O4-MeT) in DNA. Repairs the methylated nucleobase in DNA by stoichiometrically transferring the methyl group to a cysteine residue in the enzyme. This is a suicide reaction: the enzyme is irreversibly inactivated. The sequence is that of Methylated-DNA--protein-cysteine methyltransferase from Salmonella typhi.